A 410-amino-acid chain; its full sequence is LL-diaminopimelate aminotransferase (410 aa).

Substrate contacts are provided by Tyr-15 and Gly-42. Residues Tyr-72, 108-109, Tyr-132, Asn-187, Tyr-218, and 246-248 each bind pyridoxal 5'-phosphate; these read SK and SFS. Lys-109, Tyr-132, and Asn-187 together coordinate substrate. Position 249 is an N6-(pyridoxal phosphate)lysine (Lys-249). Arg-257 and Asn-292 together coordinate pyridoxal 5'-phosphate. Residues Asn-292 and Arg-388 each contribute to the substrate site.

It belongs to the class-I pyridoxal-phosphate-dependent aminotransferase family. LL-diaminopimelate aminotransferase subfamily. In terms of assembly, homodimer. Pyridoxal 5'-phosphate is required as a cofactor.

The enzyme catalyses (2S,6S)-2,6-diaminopimelate + 2-oxoglutarate = (S)-2,3,4,5-tetrahydrodipicolinate + L-glutamate + H2O + H(+). Its pathway is amino-acid biosynthesis; L-lysine biosynthesis via DAP pathway; LL-2,6-diaminopimelate from (S)-tetrahydrodipicolinate (aminotransferase route): step 1/1. In terms of biological role, involved in the synthesis of meso-diaminopimelate (m-DAP or DL-DAP), required for both lysine and peptidoglycan biosynthesis. Catalyzes the direct conversion of tetrahydrodipicolinate to LL-diaminopimelate. The chain is LL-diaminopimelate aminotransferase from Thermosynechococcus vestitus (strain NIES-2133 / IAM M-273 / BP-1).